A 355-amino-acid polypeptide reads, in one-letter code: uncharacterized protein (355 aa).

3 disordered regions span residues 1–121 (MPID…MELR), 226–253 (RLMN…KSSM), and 336–355 (NLHR…RKRT). Over residues 24–37 (LESESSSESDYEEV) the composition is skewed to acidic residues. A compositionally biased stretch (polar residues) spans 65-87 (ETKTSSNFQNINPVQTIDNSASE). Positions 91 to 105 (DASSAEGGSNSAASS) are enriched in low complexity. A compositionally biased stretch (acidic residues) spans 106 to 117 (SEEEDSSDSEYE). The span at 226–245 (RLMNSEEREAQDLKDAEASR) shows a compositional bias: basic and acidic residues.

This is an uncharacterized protein from Schizosaccharomyces pombe (strain 972 / ATCC 24843) (Fission yeast).